We begin with the raw amino-acid sequence, 765 residues long: uncharacterized protein (765 aa).

Disordered stretches follow at residues 9–61, 128–164, 265–289, 301–373, 409–526, 540–560, and 668–765; these read NDGN…PSSV, QQQQ…NYTS, TTSS…NITT, WTTT…TYIQ, IGNN…NQSN, PTKK…KYSE, and NSNT…KSRI. 2 stretches are compositionally biased toward low complexity: residues 40–61 and 143–161; these read SNNI…PSSV and SNKS…NNNN. Low complexity-rich tracts occupy residues 301 to 311, 325 to 344, 353 to 373, 414 to 428, 438 to 485, 495 to 504, and 513 to 526; these read WTTTKPTSSTK, YDSP…STSS, IQPT…TYIQ, SNHT…SLST, NNNN…INNN, DNQSSYSSPD, and SQQQ…NQSN. The span at 668–745 shows a compositional bias: low complexity; that stretch reads NSNTDNYNYY…NNSRNNYNNN (78 aa).

This is an uncharacterized protein from Dictyostelium discoideum (Social amoeba).